Consider the following 310-residue polypeptide: Carbamate kinase (310 aa).

The protein belongs to the carbamate kinase family. Homodimer.

The protein resides in the cytoplasm. It catalyses the reaction hydrogencarbonate + NH4(+) + ATP = carbamoyl phosphate + ADP + H2O + H(+). It functions in the pathway amino-acid degradation; L-arginine degradation via ADI pathway. The sequence is that of Carbamate kinase from Haemophilus influenzae (strain ATCC 51907 / DSM 11121 / KW20 / Rd).